The sequence spans 457 residues: tRNA modification GTPase MnmE (457 aa).

Residues Arg-23, Glu-86, and Arg-125 each contribute to the (6S)-5-formyl-5,6,7,8-tetrahydrofolate site. The region spanning 221-377 (GVSVLIAGKP…LREAVFETFI (157 aa)) is the TrmE-type G domain. Asn-231 serves as a coordination point for K(+). GTP contacts are provided by residues 231–236 (NVGKSS), 250–256 (TSVPGTT), and 275–278 (DTAG). Ser-235 is a Mg(2+) binding site. K(+) contacts are provided by Thr-250, Val-252, and Thr-255. Residue Thr-256 participates in Mg(2+) binding. Lys-457 contributes to the (6S)-5-formyl-5,6,7,8-tetrahydrofolate binding site.

It belongs to the TRAFAC class TrmE-Era-EngA-EngB-Septin-like GTPase superfamily. TrmE GTPase family. Homodimer. Heterotetramer of two MnmE and two MnmG subunits. It depends on K(+) as a cofactor.

The protein localises to the cytoplasm. In terms of biological role, exhibits a very high intrinsic GTPase hydrolysis rate. Involved in the addition of a carboxymethylaminomethyl (cmnm) group at the wobble position (U34) of certain tRNAs, forming tRNA-cmnm(5)s(2)U34. This Geobacter metallireducens (strain ATCC 53774 / DSM 7210 / GS-15) protein is tRNA modification GTPase MnmE.